A 139-amino-acid polypeptide reads, in one-letter code: Small ribosomal subunit protein uS11 (139 aa).

Residues 117–139 (VEDVTPIPHDGTRPKGGRRGRRV) form a disordered region.

Belongs to the universal ribosomal protein uS11 family. In terms of assembly, part of the 30S ribosomal subunit.

Its function is as follows. Located on the platform of the 30S subunit. In Thermococcus onnurineus (strain NA1), this protein is Small ribosomal subunit protein uS11.